Here is a 231-residue protein sequence, read N- to C-terminus: 5'-methylthioadenosine/S-adenosylhomocysteine nucleosidase (231 aa).

E12 serves as the catalytic Proton acceptor. Substrate is bound by residues G78, M153, and 174–175 (ME). Catalysis depends on D198, which acts as the Proton donor.

It belongs to the PNP/UDP phosphorylase family. MtnN subfamily.

The catalysed reaction is S-adenosyl-L-homocysteine + H2O = S-(5-deoxy-D-ribos-5-yl)-L-homocysteine + adenine. It carries out the reaction S-methyl-5'-thioadenosine + H2O = 5-(methylsulfanyl)-D-ribose + adenine. It catalyses the reaction 5'-deoxyadenosine + H2O = 5-deoxy-D-ribose + adenine. It functions in the pathway amino-acid biosynthesis; L-methionine biosynthesis via salvage pathway; S-methyl-5-thio-alpha-D-ribose 1-phosphate from S-methyl-5'-thioadenosine (hydrolase route): step 1/2. In terms of biological role, catalyzes the irreversible cleavage of the glycosidic bond in both 5'-methylthioadenosine (MTA) and S-adenosylhomocysteine (SAH/AdoHcy) to adenine and the corresponding thioribose, 5'-methylthioribose and S-ribosylhomocysteine, respectively. Also cleaves 5'-deoxyadenosine, a toxic by-product of radical S-adenosylmethionine (SAM) enzymes, into 5-deoxyribose and adenine. This chain is 5'-methylthioadenosine/S-adenosylhomocysteine nucleosidase, found in Bacillus subtilis (strain 168).